We begin with the raw amino-acid sequence, 85 residues long: Conotoxin Cap15a (85 aa).

A signal peptide spans 1-23 (MEKLTFLILVATVLLTIHVLVQS). Positions 24-49 (VGDKHLKRRPKQYATKHLSALMRGHR) are excised as a propeptide. Residue Q50 is modified to Pyrrolidone carboxylic acid.

The protein belongs to the conotoxin O2 superfamily. Contains 4 disulfide bonds. Expressed by the venom duct.

The protein localises to the secreted. The polypeptide is Conotoxin Cap15a (Conus capitaneus (Captain cone)).